We begin with the raw amino-acid sequence, 257 residues long: Granzyme M (257 aa).

Residues 1-23 (MEACVSSLLVLALGALSVGSSFG) form the signal peptide. The propeptide at 24–25 (TQ) is activation peptide. Residues 26-254 (IIGGREVIPH…YVSWIRKVTG (229 aa)) enclose the Peptidase S1 domain. Cysteines 51 and 67 form a disulfide. Catalysis depends on charge relay system residues H66 and D111. Cystine bridges form between C145/C213, C176/C192, and C203/C230. N177 carries an N-linked (GlcNAc...) asparagine glycan. S207 (charge relay system) is an active-site residue.

The protein belongs to the peptidase S1 family. Granzyme subfamily. Highly and constitutively expressed in activated natural killer (NK) cells.

It localises to the secreted. The protein localises to the cytoplasmic granule. In terms of biological role, cleaves peptide substrates after methionine, leucine, and norleucine. Physiological substrates include EZR, alpha-tubulins and the apoptosis inhibitor BIRC5/Survivin. Promotes caspase activation and subsequent apoptosis of target cells. This chain is Granzyme M (GZMM), found in Homo sapiens (Human).